A 616-amino-acid polypeptide reads, in one-letter code: Schwannomin-interacting protein 1 homolog (616 aa).

The span at 38–50 shows a compositional bias: acidic residues; the sequence is ESDLTDSDREDDP. Disordered regions lie at residues 38 to 71, 204 to 251, and 292 to 320; these read ESDL…GQDS, LKQT…PDTF, and SSLE…YSNQ. Polar residues-rich tracts occupy residues 62–71 and 204–217; these read SETFKNGQDS and LKQT…GNST. A coiled-coil region spans residues 550–594; it reads LQLLVNNLQEYIENLNVTLLESLKERDDLNSDQDDILHDLEKINN.

It belongs to the SCHIP1 family. As to quaternary structure, interacts with ex; the interaction results in recruitment of Schip1 to the apical cell membrane. Interacts with Tao; the interaction enhances Tao kinase activity. Interacts with Mer. As to expression, in eye disks of the third instar larvae, expressed in all cells (at protein level).

Its subcellular location is the cell junction. It localises to the adherens junction. The protein resides in the apical cell membrane. Functionally, regulator of the Hippo/SWH (Sav/Wts/Hpo) signaling pathway, a signaling pathway that plays a pivotal role in organ size control and tumor suppression by restricting proliferation and promoting apoptosis. The core of this pathway is composed of a kinase cascade wherein Hippo (hpo), in complex with its regulatory protein Salvador (sav), phosphorylates and activates Warts (wts) in complex with its regulatory protein Mats, which in turn phosphorylates and inactivates the Yorkie (yki) oncoprotein. Schip1 promotes kinase activity of Tao and enhances phosphorylation of hpo by Tao. In Drosophila melanogaster (Fruit fly), this protein is Schwannomin-interacting protein 1 homolog.